A 335-amino-acid chain; its full sequence is Dolichyl-diphosphooligosaccharide--protein glycosyltransferase subunit MAGT1 (335 aa).

The signal sequence occupies residues Met1–Ala29. Topologically, residues Gln30–Pro184 are extracellular. A Thioredoxin domain is found at Trp47–Asp175. The N-linked (GlcNAc...) asparagine glycan is linked to Asn71. A disulfide bridge links Cys87 with Cys90. The chain crosses the membrane as a helical span at residues Asn185–Leu205. Topologically, residues Arg206 to Asn209 are cytoplasmic. A helical membrane pass occupies residues Met210–Met230. Topologically, residues Thr231 to His270 are extracellular. The helical transmembrane segment at Ile271–Ala291 threads the bilayer. Residues Ser292–Arg300 lie on the Cytoplasmic side of the membrane. A helical membrane pass occupies residues Met301–Phe321. Residues Arg322–Ser335 lie on the Extracellular side of the membrane.

The protein belongs to the OST3/OST6 family. Accessory component of the STT3B-containing form of the oligosaccharyltransferase (OST) complex. OST exists in two different complex forms which contain common core subunits RPN1, RPN2, OST48, OST4, DAD1 and TMEM258, either STT3A or STT3B as catalytic subunits, and form-specific accessory subunits. OST can form stable complexes with the Sec61 complex or with both the Sec61 and TRAP complexes. The association of TUSC3 or MAGT1 with the STT3B-containing complex seems to be mutually exclusvice.

The protein resides in the cell membrane. It localises to the endoplasmic reticulum. Its subcellular location is the endoplasmic reticulum membrane. The protein operates within protein modification; protein glycosylation. Accessory component of the STT3B-containing form of the N-oligosaccharyl transferase (OST) complex which catalyzes the transfer of a high mannose oligosaccharide from a lipid-linked oligosaccharide donor to an asparagine residue within an Asn-X-Ser/Thr consensus motif in nascent polypeptide chains. Involved in N-glycosylation of STT3B-dependent substrates. Specifically required for the glycosylation of a subset of acceptor sites that are near cysteine residues; in this function seems to act redundantly with TUSC3. In its oxidized form proposed to form transient mixed disulfides with a glycoprotein substrate to facilitate access of STT3B to the unmodified acceptor site. Also has oxidoreductase-independent functions in the STT3B-containing OST complex possibly involving substrate recognition. Could indirectly play a role in Mg(2+) transport in epithelial cells. This is Dolichyl-diphosphooligosaccharide--protein glycosyltransferase subunit MAGT1 from Rattus norvegicus (Rat).